The following is a 129-amino-acid chain: Protein BEX2 (129 aa).

Positions 1-38 (MESKVEQGVKNLNMENDHQEKEEKEEKPQDANKREPVV) are disordered. Residues 15–36 (ENDHQEKEEKEEKPQDANKREP) show a composition bias toward basic and acidic residues. Arg51 is modified (omega-N-methylarginine). A disordered region spans residues 108-129 (SLRAVSTDPPHHDHHDEFCLMP). Over residues 116–129 (PPHHDHHDEFCLMP) the composition is skewed to basic and acidic residues. The tract at residues 118–122 (HHDHH) is his cluster. Zn(2+) is bound at residue Cys126.

The protein belongs to the BEX family. As to quaternary structure, interacts with LMO2, possibly leading to regulate the transcriptional activity of a DNA-binding complex containing LMO2. Interacts with OMP.

It localises to the nucleus. Its subcellular location is the cytoplasm. Functionally, regulator of mitochondrial apoptosis and G1 cell cycle. Regulates the level of PP2A regulatory subunit B and PP2A phosphatase activity. In absence of reductive stress, acts as a pseudosubstrate for the CRL2(FEM1B) complex: associates with FEM1B via zinc, thereby preventing association between FEM1B and its substrates. This is Protein BEX2 (Bex2) from Rattus norvegicus (Rat).